Reading from the N-terminus, the 299-residue chain is Protein tantalus (299 aa).

The segment at 16-100 is disordered; sequence KDNRSPTTNS…RSSTFGARAG (85 aa). The segment covering 20 to 35 has biased composition (polar residues); that stretch reads SPTTNSNLSWQLNQMA. Positions 53-69 are enriched in acidic residues; the sequence is ESDDNVSSESHDSDDVD. The span at 84–93 shows a compositional bias: low complexity; sequence CISGSSRRSS. Residues Ser-204 and Ser-264 each carry the phosphoserine modification.

In terms of assembly, binds to DNA in vitro. Interacts directly with Asx. Ubiquitously expressed in precellularized embryos. Then it decreases at cellular blastoderm to increase again during germ band extension. During germ band extension, it is highly expressed in somatic and visceral mesoderm. Ubiquitously expressed in imaginal disks. In ovary, it is expressed from stage 10.

The protein localises to the nucleus. Its subcellular location is the cytoplasm. It localises to the chromosome. Potential cofactor involved in sensory organ development. Despite its interaction with the Polycomb group protein Asx, it does not regulate the expression of homeotic genes. The chain is Protein tantalus from Drosophila melanogaster (Fruit fly).